The sequence spans 38 residues: Large ribosomal subunit protein bL36 (38 aa).

This sequence belongs to the bacterial ribosomal protein bL36 family.

The polypeptide is Large ribosomal subunit protein bL36 (Prochlorococcus marinus (strain SARG / CCMP1375 / SS120)).